The sequence spans 301 residues: GTPase Era (301 aa).

The 169-residue stretch at 7–175 (YCGFIAIVGR…AAIVRKHLPE (169 aa)) folds into the Era-type G domain. The tract at residues 15 to 22 (GRPNVGKS) is G1. 15 to 22 (GRPNVGKS) serves as a coordination point for GTP. Residues 41-45 (QTTRH) form a G2 region. Residues 62 to 65 (DTPG) are G3. Residues 62 to 66 (DTPGL) and 124 to 127 (NKVD) each bind GTP. Residues 124 to 127 (NKVD) are G4. Residues 154 to 156 (ISA) form a G5 region. Residues 206–283 (LGAELPYSVT…HLELWVKVKS (78 aa)) form the KH type-2 domain.

It belongs to the TRAFAC class TrmE-Era-EngA-EngB-Septin-like GTPase superfamily. Era GTPase family. In terms of assembly, monomer.

Its subcellular location is the cytoplasm. The protein resides in the cell inner membrane. Functionally, an essential GTPase that binds both GDP and GTP, with rapid nucleotide exchange. Plays a role in 16S rRNA processing and 30S ribosomal subunit biogenesis and possibly also in cell cycle regulation and energy metabolism. This Escherichia coli O1:K1 / APEC protein is GTPase Era.